Reading from the N-terminus, the 124-residue chain is UPF0482 protein YPK_1977 (124 aa).

The first 32 residues, 1-32, serve as a signal peptide directing secretion; that stretch reads MMKINNLPRLIRAFLPATLLMLPLVWQTPALA. The disordered stretch occupies residues 47–69; it reads GGNNDPMSKEQARQSQQQWDETN.

It belongs to the UPF0482 family.

The polypeptide is UPF0482 protein YPK_1977 (Yersinia pseudotuberculosis serotype O:3 (strain YPIII)).